A 358-amino-acid chain; its full sequence is MKTLTVELGERSYPIFIGQGLLGQAELFKPYVTGTQVLIVSNTTVAPLYLEKAKQAFSGYDVKTVILPDGEQYKNLDVLNQIFDVAIENRFDRKCTFVALGGGVIGDMTGFAAASYQRGVNFIQIPTTLLSQVDSSVGGKTGVNHPKGKNMIGAFHQPECVVIDTDTLNTLEDRELSAGLAEVIKYGLIVDYPFFEWLEQNLPGLLARDPVVLAEAIERSCQNKATIVAKDEKEAGLRALFNLGHTFGHAIEAGMGYGNWLHGEGVSAGMMQAVYLSKLMGDLTQTDQKRIAAILQSAHLPVMPPKEMSVQQFLDLMAGDKKVQAGQIRLVLLKAIGQAYVTGDYPAELLERTLIEYR.

NAD(+) is bound by residues 69–74, 103–107, 127–128, lysine 140, lysine 149, and 167–170; these read DGEQYK, GVIGD, TT, and TLNT. 3 residues coordinate Zn(2+): glutamate 182, histidine 245, and histidine 262.

Belongs to the sugar phosphate cyclases superfamily. Dehydroquinate synthase family. It depends on Co(2+) as a cofactor. Zn(2+) serves as cofactor. The cofactor is NAD(+).

The protein localises to the cytoplasm. It catalyses the reaction 7-phospho-2-dehydro-3-deoxy-D-arabino-heptonate = 3-dehydroquinate + phosphate. It participates in metabolic intermediate biosynthesis; chorismate biosynthesis; chorismate from D-erythrose 4-phosphate and phosphoenolpyruvate: step 2/7. Functionally, catalyzes the conversion of 3-deoxy-D-arabino-heptulosonate 7-phosphate (DAHP) to dehydroquinate (DHQ). The sequence is that of 3-dehydroquinate synthase from Hydrogenovibrio crunogenus (strain DSM 25203 / XCL-2) (Thiomicrospira crunogena).